A 95-amino-acid polypeptide reads, in one-letter code: Aspartyl/glutamyl-tRNA(Asn/Gln) amidotransferase subunit C (95 aa).

Belongs to the GatC family. In terms of assembly, heterotrimer of A, B and C subunits.

It catalyses the reaction L-glutamyl-tRNA(Gln) + L-glutamine + ATP + H2O = L-glutaminyl-tRNA(Gln) + L-glutamate + ADP + phosphate + H(+). The enzyme catalyses L-aspartyl-tRNA(Asn) + L-glutamine + ATP + H2O = L-asparaginyl-tRNA(Asn) + L-glutamate + ADP + phosphate + 2 H(+). In terms of biological role, allows the formation of correctly charged Asn-tRNA(Asn) or Gln-tRNA(Gln) through the transamidation of misacylated Asp-tRNA(Asn) or Glu-tRNA(Gln) in organisms which lack either or both of asparaginyl-tRNA or glutaminyl-tRNA synthetases. The reaction takes place in the presence of glutamine and ATP through an activated phospho-Asp-tRNA(Asn) or phospho-Glu-tRNA(Gln). The protein is Aspartyl/glutamyl-tRNA(Asn/Gln) amidotransferase subunit C of Syntrophus aciditrophicus (strain SB).